The chain runs to 76 residues: U7-lycotoxin-Ls1c (76 aa).

Positions 1-22 are cleaved as a signal peptide; sequence MKLIIFTGLALFLLVSLIDVEA. The propeptide occupies 23–26; sequence QNEG.

The protein belongs to the neurotoxin 19 (CSTX) family. 07 (U7-Lctx) subfamily. In terms of processing, contains 4 disulfide bonds. In terms of tissue distribution, expressed by the venom gland.

The protein localises to the secreted. This Lycosa singoriensis (Wolf spider) protein is U7-lycotoxin-Ls1c.